The following is a 572-amino-acid chain: MSHNNFELSPDYKDIDKKDDLNPSIVEKGYVEGVVDDVQPERKSFITKFFDDFKPAISTDEDGSALKRSLKARHMQMIAIGGAIGSGLYVGSGSSLSDGGPASIIINYTLIGIMMFFVVYALGELSVAYPVAGGFNTIATRFIDPAWGFTISWNYFINYFITFPLELTTCAITFRFWTDINSAAWISIFLVIVIIINLFGVRAYGEVEFILSTLKVIATLGFIILAIIINCGGVPTDHRGYIGGSIIKKDPFRHGFKGFCSVFTTAAFSFSGTEFIGLAAAEVDNPQKSLPHAVKQVFWRIAVFYIVSLTLIGLLISPDDPNLMGNGSTSVSPFVLAIQEANIKGLPSVFNAVIIISVVSVTNSSTYAAARTLHGMAGLGHAPKFFKYTDRLGRPLIAMVVVLLFGFFAYINEADKNGNDVSDTVFDWLLALAGLSNFFSWGSICLSHIIFRLAYKRQGRSLRDLGFVSPMGIWGSCIGLFFNILCLMAQFYVSLFPIGGKPNANDFFQGYLAACVAIVFFVGYKIYDRSHVPSLDKLDISTGLRTYENSDEEDETSSGFKHVLKKIYGAFC.

12 helical membrane-spanning segments follow: residues 77–97, 102–122, 145–165, 180–200, 209–229, 259–279, 297–317, 341–361, 392–412, 431–451, 478–498, and 507–527; these read MIAI…SSLS, ASII…VYAL, PAWG…TFPL, INSA…NLFG, FILS…AIII, FCSV…IGLA, VFWR…LLIS, ANIK…VVSV, LGRP…AYIN, ALAG…HIIF, IGLF…LFPI, and FFQG…YKIY.

It belongs to the amino acid-polyamine-organocation (APC) superfamily.

It localises to the membrane. This is an uncharacterized protein from Schizosaccharomyces pombe (strain 972 / ATCC 24843) (Fission yeast).